A 384-amino-acid chain; its full sequence is Putative 8-amino-7-oxononanoate synthase (384 aa).

Residue arginine 18 coordinates substrate. Residue 105 to 106 (GY) participates in pyridoxal 5'-phosphate binding. Residue histidine 130 participates in substrate binding. Residues serine 176, 201-204 (DDAH), and 233-236 (TLSK) contribute to the pyridoxal 5'-phosphate site. N6-(pyridoxal phosphate)lysine is present on lysine 236. Threonine 349 contributes to the substrate binding site.

Belongs to the class-II pyridoxal-phosphate-dependent aminotransferase family. BioF subfamily. As to quaternary structure, homodimer. Pyridoxal 5'-phosphate is required as a cofactor.

It catalyses the reaction 6-carboxyhexanoyl-[ACP] + L-alanine + H(+) = (8S)-8-amino-7-oxononanoate + holo-[ACP] + CO2. It participates in cofactor biosynthesis; biotin biosynthesis. Catalyzes the decarboxylative condensation of pimeloyl-[acyl-carrier protein] and L-alanine to produce 8-amino-7-oxononanoate (AON), [acyl-carrier protein], and carbon dioxide. The chain is Putative 8-amino-7-oxononanoate synthase (bioF) from Desulfovibrio desulfuricans (strain ATCC 27774 / DSM 6949 / MB).